The primary structure comprises 106 residues: Large ribosomal subunit protein eL42 (106 aa).

A disordered region spans residues 26–53 (YKKGKDSLYAQGKRRYDRKQSGYGGQTK).

It belongs to the eukaryotic ribosomal protein eL42 family. In terms of assembly, component of the large ribosomal subunit.

It localises to the cytoplasm. Component of the large ribosomal subunit. The ribosome is a large ribonucleoprotein complex responsible for the synthesis of proteins in the cell. This Danio rerio (Zebrafish) protein is Large ribosomal subunit protein eL42 (rpl36a).